A 235-amino-acid chain; its full sequence is Urease accessory protein UreF (235 aa).

The protein belongs to the UreF family. UreD, UreF and UreG form a complex that acts as a GTP-hydrolysis-dependent molecular chaperone, activating the urease apoprotein by helping to assemble the nickel containing metallocenter of UreC. The UreE protein probably delivers the nickel.

The protein localises to the cytoplasm. Its function is as follows. Required for maturation of urease via the functional incorporation of the urease nickel metallocenter. The sequence is that of Urease accessory protein UreF from Ureaplasma parvum serovar 3 (strain ATCC 27815 / 27 / NCTC 11736).